Here is a 179-residue protein sequence, read N- to C-terminus: Large ribosomal subunit protein uL5 (179 aa).

This sequence belongs to the universal ribosomal protein uL5 family. In terms of assembly, part of the 50S ribosomal subunit; part of the 5S rRNA/L5/L18/L25 subcomplex. Contacts the 5S rRNA and the P site tRNA. Forms a bridge to the 30S subunit in the 70S ribosome.

In terms of biological role, this is one of the proteins that bind and probably mediate the attachment of the 5S RNA into the large ribosomal subunit, where it forms part of the central protuberance. In the 70S ribosome it contacts protein S13 of the 30S subunit (bridge B1b), connecting the 2 subunits; this bridge is implicated in subunit movement. Contacts the P site tRNA; the 5S rRNA and some of its associated proteins might help stabilize positioning of ribosome-bound tRNAs. The protein is Large ribosomal subunit protein uL5 of Prochlorococcus marinus (strain MIT 9211).